The chain runs to 430 residues: Glutamyl-tRNA reductase (430 aa).

Substrate-binding positions include 49 to 52 (TCNR), S109, 114 to 116 (EGQ), and Q120. C50 (nucleophile) is an active-site residue. 189-194 (GAGKMA) provides a ligand contact to NADP(+).

It belongs to the glutamyl-tRNA reductase family. Homodimer.

It carries out the reaction (S)-4-amino-5-oxopentanoate + tRNA(Glu) + NADP(+) = L-glutamyl-tRNA(Glu) + NADPH + H(+). The protein operates within porphyrin-containing compound metabolism; protoporphyrin-IX biosynthesis; 5-aminolevulinate from L-glutamyl-tRNA(Glu): step 1/2. It functions in the pathway porphyrin-containing compound metabolism; chlorophyll biosynthesis. Functionally, catalyzes the NADPH-dependent reduction of glutamyl-tRNA(Glu) to glutamate 1-semialdehyde (GSA). The sequence is that of Glutamyl-tRNA reductase from Crocosphaera subtropica (strain ATCC 51142 / BH68) (Cyanothece sp. (strain ATCC 51142)).